A 1634-amino-acid polypeptide reads, in one-letter code: Probable serine/threonine-protein kinase DDB_G0282895 (1634 aa).

The stretch at 40–63 (YKGNLNENKLKNGKGTFLFPNSIY) is one MORN 1 repeat. Positions 84–131 (QKIQKKSSQSKSQQQPPSQTKKSSSPINLSPRLQGQNPTITTNGSNNN) are disordered. Residues 89–109 (KSSQSKSQQQPPSQTKKSSSP) show a composition bias toward low complexity. Polar residues predominate over residues 110–119 (INLSPRLQGQ). Low complexity predominate over residues 120-131 (NPTITTNGSNNN). Residues 169–191 (YNGKWINGKANGIGCFHFSKDDS) form an MORN 2 repeat. Composition is skewed to low complexity over residues 273-292 (SNNNSNGTTSPTSPSILSPT) and 318-339 (SGSGFCSPSSSLSIKMSSPISS). Disordered regions lie at residues 273–367 (SNNN…QQQQ), 658–750 (TTAT…TFSV), and 783–816 (SSILNNNNNNNNNNNNNNNNNNNNNNNNNNNCGQ). Over residues 340 to 351 (GLQHSKTQPNVS) the composition is skewed to polar residues. Composition is skewed to low complexity over residues 352-367 (QSQNQQIQQQQQQQQQ), 658-688 (TTATPNNNNNSSGNSKLTTTTHLTNNTTTTT), and 703-715 (PPSQSSSSSSPSS). Residues 716–732 (DQTNLPSIAISSSNGIS) show a composition bias toward polar residues. The span at 787–813 (NNNNNNNNNNNNNNNNNNNNNNNNNNN) shows a compositional bias: low complexity. Residues 1255–1275 (IFIGFMELCVIDELCGFSFIY) form a helical membrane-spanning segment. The region spanning 1377-1634 (LQILQFLGEG…IIQKLCNHKC (258 aa)) is the Protein kinase domain. Residues 1383–1391 (LGEGALAEV) and K1404 contribute to the ATP site. The active-site Proton acceptor is the D1500.

Belongs to the protein kinase superfamily. TKL Ser/Thr protein kinase family.

Its subcellular location is the membrane. The catalysed reaction is L-seryl-[protein] + ATP = O-phospho-L-seryl-[protein] + ADP + H(+). It catalyses the reaction L-threonyl-[protein] + ATP = O-phospho-L-threonyl-[protein] + ADP + H(+). The chain is Probable serine/threonine-protein kinase DDB_G0282895 from Dictyostelium discoideum (Social amoeba).